We begin with the raw amino-acid sequence, 177 residues long: Transmembrane protein 190 (177 aa).

The first 21 residues, 1–21 (MLGCGIPALGLLLLLQGSADG), serve as a signal peptide directing secretion. At 22 to 81 (NGIQGFFYPWSCEGDIWDRESCGGQAAIDSPNLCLRLRCCYRNGVCYHQRPDENVRRKHM) the chain is on the extracellular side. A P-type domain is found at 31-71 (WSCEGDIWDRESCGGQAAIDSPNLCLRLRCCYRNGVCYHQR). Cystine bridges form between C33–C61, C43–C60, and C55–C67. A helical membrane pass occupies residues 82-102 (WALVWTCSGLLLLSCSICLFW). At 103–177 (WAKRRDVLHM…EETEGEEEED (75 aa)) the chain is on the cytoplasmic side. A disordered region spans residues 131–177 (KHRGTKKTPSTGSVPVALSKESRDVEGGTEGEGTEEGEETEGEEEED). Residues 157 to 177 (GGTEGEGTEEGEETEGEEEED) show a composition bias toward acidic residues.

It localises to the membrane. This chain is Transmembrane protein 190 (TMEM190), found in Homo sapiens (Human).